Consider the following 430-residue polypeptide: Dynactin subunit 2 (430 aa).

Disordered regions lie at residues Met1–Ser51 and Ser201–Ser228. Residues Ser32–Val44 show a composition bias toward polar residues. Coiled coils occupy residues Thr241 to Thr319 and Asp397 to Gln430.

Belongs to the dynactin subunit 2 family. In terms of assembly, subunit of dynactin, a multiprotein complex associated with dynein.

It localises to the cytoplasm. The protein localises to the cytoskeleton. The protein resides in the membrane. Its function is as follows. Modulates cytoplasmic dynein binding to an organelle, and plays a role in prometaphase chromosome alignment and spindle organization during mitosis. This chain is Dynactin subunit 2 (dynB), found in Dictyostelium discoideum (Social amoeba).